We begin with the raw amino-acid sequence, 250 residues long: Type III pantothenate kinase (250 aa).

13 to 20 (DVGNSYLK) lines the ATP pocket. 110-113 (GNDL) provides a ligand contact to substrate. Asp-112 serves as the catalytic Proton acceptor. Residue Thr-134 coordinates ATP. Residue Thr-186 coordinates substrate.

Belongs to the type III pantothenate kinase family. In terms of assembly, homodimer. NH4(+) is required as a cofactor. It depends on K(+) as a cofactor.

It localises to the cytoplasm. The catalysed reaction is (R)-pantothenate + ATP = (R)-4'-phosphopantothenate + ADP + H(+). It participates in cofactor biosynthesis; coenzyme A biosynthesis; CoA from (R)-pantothenate: step 1/5. In terms of biological role, catalyzes the phosphorylation of pantothenate (Pan), the first step in CoA biosynthesis. This is Type III pantothenate kinase from Mycoplasmopsis synoviae (strain 53) (Mycoplasma synoviae).